Here is a 268-residue protein sequence, read N- to C-terminus: MTDKVHLGHRARKRFGQNFLFDDMIIGKIVSAIDPKPEDNLVEIGPGLGAITEPVAELSGHLTVVELDKDLAQRLIEHPFLGPKLTVNQGDAMTFDFASLVRDDKKLKVFGNLPYNISTPLLFHLFEFADNIEHMHFMLQKEVVKRMVAGPGSKTFGRLSVMTQYYCNAMPVIEVPPECFKPAPKVDSAVIRLIPKKPEQRTAKSVKILNNVCLEAFNQRRKTLRNSLSNLLTADELTSIGIDVTLRAERLSLQQFIDIANWIYDNKQ.

S-adenosyl-L-methionine is bound by residues N18, L20, G45, E66, D91, and N112.

This sequence belongs to the class I-like SAM-binding methyltransferase superfamily. rRNA adenine N(6)-methyltransferase family. RsmA subfamily.

It is found in the cytoplasm. The catalysed reaction is adenosine(1518)/adenosine(1519) in 16S rRNA + 4 S-adenosyl-L-methionine = N(6)-dimethyladenosine(1518)/N(6)-dimethyladenosine(1519) in 16S rRNA + 4 S-adenosyl-L-homocysteine + 4 H(+). Its function is as follows. Specifically dimethylates two adjacent adenosines (A1518 and A1519) in the loop of a conserved hairpin near the 3'-end of 16S rRNA in the 30S particle. May play a critical role in biogenesis of 30S subunits. This chain is Ribosomal RNA small subunit methyltransferase A, found in Pseudoalteromonas translucida (strain TAC 125).